The sequence spans 194 residues: Peptidyl-tRNA hydrolase (194 aa).

Tyr17 lines the tRNA pocket. His22 functions as the Proton acceptor in the catalytic mechanism. 3 residues coordinate tRNA: Phe68, Asn70, and Asn116.

This sequence belongs to the PTH family. Monomer.

The protein resides in the cytoplasm. The enzyme catalyses an N-acyl-L-alpha-aminoacyl-tRNA + H2O = an N-acyl-L-amino acid + a tRNA + H(+). Functionally, hydrolyzes ribosome-free peptidyl-tRNAs (with 1 or more amino acids incorporated), which drop off the ribosome during protein synthesis, or as a result of ribosome stalling. Its function is as follows. Catalyzes the release of premature peptidyl moieties from peptidyl-tRNA molecules trapped in stalled 50S ribosomal subunits, and thus maintains levels of free tRNAs and 50S ribosomes. This chain is Peptidyl-tRNA hydrolase, found in Shewanella woodyi (strain ATCC 51908 / MS32).